The sequence spans 52 residues: U-scutigerotoxin(01)-Tl1a (52 aa).

Positions 1–25 are cleaved as a signal peptide; it reads MLAKAMSLLMMFLLVLVIGSVMVSA.

Belongs to the scutigerotoxin-01 family. Contains 1 disulfide bond. As to expression, expressed by the venom gland.

It is found in the secreted. This is U-scutigerotoxin(01)-Tl1a from Thereuopoda longicornis (Long-legged centipede).